Here is a 349-residue protein sequence, read N- to C-terminus: DNA polymerase IV (349 aa).

Residues 4-185 (IIHIDCDCFY…LPVAKLHGVG (182 aa)) form the UmuC domain. Positions 8 and 103 each coordinate Mg(2+). Residue E104 is part of the active site.

It belongs to the DNA polymerase type-Y family. As to quaternary structure, monomer. Requires Mg(2+) as cofactor.

Its subcellular location is the cytoplasm. It catalyses the reaction DNA(n) + a 2'-deoxyribonucleoside 5'-triphosphate = DNA(n+1) + diphosphate. In terms of biological role, poorly processive, error-prone DNA polymerase involved in untargeted mutagenesis. Copies undamaged DNA at stalled replication forks, which arise in vivo from mismatched or misaligned primer ends. These misaligned primers can be extended by PolIV. Exhibits no 3'-5' exonuclease (proofreading) activity. May be involved in translesional synthesis, in conjunction with the beta clamp from PolIII. In Pseudomonas paraeruginosa (strain DSM 24068 / PA7) (Pseudomonas aeruginosa (strain PA7)), this protein is DNA polymerase IV.